Reading from the N-terminus, the 245-residue chain is Dehydrogenase/reductase SDR family member 6 (245 aa).

Residues 16–18 (QGI), Asp-37, and Asp-58 each bind NAD(+). Arg-144 lines the substrate pocket. Tyr-147 acts as the Proton acceptor in catalysis. Residues Lys-151 and 180 to 184 (VDTPS) each bind NAD(+). Positions 188 and 205 each coordinate substrate.

This sequence belongs to the short-chain dehydrogenases/reductases (SDR) family. As to quaternary structure, homotetramer.

It localises to the cytoplasm. The catalysed reaction is cis-4-hydroxy-L-proline + NAD(+) = 4-oxo-L-proline + NADH + H(+). It catalyses the reaction (R)-3-hydroxybutanoate + NAD(+) = acetoacetate + NADH + H(+). It participates in amino-acid metabolism. Its pathway is siderophore biosynthesis. NAD(H)-dependent dehydrogenase/reductase with a preference for cyclic substrates. Catalyzes stereoselective conversion of 4-oxo-L-proline to cis-4-hydroxy-L-proline, likely a detoxification mechanism for ketoprolines. Mediates the formation of 2,5-dihydroxybenzoate (2,5-DHBA), a siderophore that chelates free cytoplasmic iron and associates with LCN2, thereby regulating iron transport and homeostasis while protecting cells against free radical-induced oxidative stress. The iron-siderophore complex is imported into mitochondria, providing an iron source for mitochondrial metabolic processes in particular heme synthesis. May act as a 3-hydroxybutyrate dehydrogenase. The chain is Dehydrogenase/reductase SDR family member 6 (BDH2) from Bos taurus (Bovine).